A 386-amino-acid chain; its full sequence is Nucleosome assembly protein 1-like 4 (386 aa).

Positions 1 to 28 are disordered; sequence MAENSLSDGGPADSVEAAKNASNTEKLT. Ala2 carries the N-acetylalanine modification. Residues Ser5, Ser7, and Ser49 each carry the phosphoserine modification. Residue Thr51 is modified to Phosphothreonine. Phosphoserine occurs at positions 53 and 54. Position 58 is a phosphothreonine (Thr58). At Lys105 the chain carries N6-acetyllysine. A Phosphoserine modification is found at Ser125. Residue Lys146 is modified to N6-acetyllysine. The Nuclear localization signal motif lies at 265-271; the sequence is IKKKQKH. Phosphoserine is present on Ser304. Over residues 339–370 the composition is skewed to acidic residues; that stretch reads AIEDDDNFEEGEEGEEEELEGDEEGEDEDDAD. Residues 339 to 386 form a disordered region; it reads AIEDDDNFEEGEEGEEEELEGDEEGEDEDDADVNPKKEPIQPAECKQQ.

This sequence belongs to the nucleosome assembly protein (NAP) family. Interacts with core (H2A, H2B, H3, H4) and linker (H1) histones. Polyglutamylated and polyglycylated. These 2 modifications occur exclusively on glutamate residues and result in either polyglutamate or polyglycine chains on the gamma-carboxyl group. Both modifications can coexist on the same protein on adjacent residues, and lowering polyglycylation levels increases polyglutamylation, and reciprocally. Polyglutamylated by TTLL4. Post-translationally, phosphorylated at the G0/G1 boundary but it is not phosphorylated in S-phase. Phosphorylated protein remains in the cytoplasm in a complex with histones during the G0/G1 transition, whereas dephosphorylation triggers its transport into the nucleus at the G1/S-boundary.

The protein localises to the nucleus. It is found in the cytoplasm. Acts as a histone chaperone in nucleosome assembly. The chain is Nucleosome assembly protein 1-like 4 (Nap1l4) from Rattus norvegicus (Rat).